The sequence spans 192 residues: Potassium channel HX13_20290 (192 aa).

Residues 1 to 24 (MTKGRLEAFSDGVLAIIITIMVLE) traverse the membrane as a helical segment. Residues 5–11 (RLEAFSD) carry the RxxxFSD motif motif. Residue leucine 25 is a topological domain, cytoplasmic. The tract at residues 26–29 (KVPE) is short helix H1. The Extracellular segment spans residues 26-39 (KVPEGSSWASLQPI). Residues 31–37 (SSWASLQ) are short helix H2. Residues 40–65 (LPRFLAYIFSFIYVGIYWNNHHHLFQ) form a helical membrane-spanning segment. Residues 66 to 71 (TVKKVN) lie on the Cytoplasmic side of the membrane. A helical transmembrane segment spans residues 72–93 (GSILWANLHLLFWLSLMPIATE). The Extracellular segment spans residues 94 to 101 (WIGTSHFA). The helical transmembrane segment at 102–126 (QNPVATYGIGLIMSAIAYTILENVI) threads the bilayer. The Cytoplasmic segment spans residues 127–133 (IRCEGEN). A helical membrane pass occupies residues 134–162 (SKLKEAIHSKFKEYISIIFYVLGIATSFF). The Extracellular segment spans residues 163–164 (YP). Residues 165–180 (YIAIGFYYLVALIWLI) traverse the membrane as a helical segment. The Cytoplasmic segment spans residues 181–192 (PDKRIEKSLKEN).

This sequence belongs to the TMEM175 family. As to quaternary structure, homotetramer.

It localises to the membrane. The catalysed reaction is K(+)(in) = K(+)(out). Functionally, potassium channel. The chain is Potassium channel HX13_20290 from Chryseobacterium sp. (strain P1-3).